Reading from the N-terminus, the 207-residue chain is Outer-membrane lipoprotein LolB (207 aa).

Positions 1–21 (MPLPDFRFIRLLPLAALVLTA) are cleaved as a signal peptide. C22 is lipidated: N-palmitoyl cysteine. Residue C22 is the site of S-diacylglycerol cysteine attachment.

The protein belongs to the LolB family. Monomer.

The protein resides in the cell outer membrane. In terms of biological role, plays a critical role in the incorporation of lipoproteins in the outer membrane after they are released by the LolA protein. This is Outer-membrane lipoprotein LolB from Escherichia coli O6:K15:H31 (strain 536 / UPEC).